We begin with the raw amino-acid sequence, 525 residues long: Ribosomal protein S6 kinase beta-1 (525 aa).

The short motif at 28–32 is the TOS motif element; the sequence is FDIDL. The interval 28–54 is disordered; that stretch reads FDIDLDQPEDAGSEDELEEGGQLNESM. Residues 30-46 show a composition bias toward acidic residues; it reads IDLDQPEDAGSEDELEE. Residues 91–352 enclose the Protein kinase domain; sequence FELLRVLGKG…AGEVQAHPFF (262 aa). ATP is bound by residues 97-105 and Lys-123; that span reads LGKGGYGKV. Residue Asp-218 is the Proton acceptor of the active site. Phosphothreonine; by PDPK1 is present on Thr-252. An AGC-kinase C-terminal domain is found at 353–423; sequence RHINWEELLA…VAPSVLESVK (71 aa). Residues 380–399 are disordered; the sequence is SQFDSKFTRQTPVDSPDDST. Over residues 381 to 399 the composition is skewed to polar residues; the sequence is QFDSKFTRQTPVDSPDDST. Ser-394 carries the phosphoserine modification. Thr-412 is subject to Phosphothreonine; by MTOR, NEK6 and NEK7. The autoinhibitory domain stretch occupies residues 424–525; sequence EKFSFEPKIR…KRPEHLRMNL (102 aa). Phosphoserine occurs at positions 434 and 441. A Phosphothreonine modification is found at Thr-444. Phosphoserine is present on residues Ser-447 and Ser-452. The segment at 486–509 is disordered; that stretch reads VTTSGEASAPLPIRQPNSGPYKKQ. Lys-516 bears the N6-acetyllysine mark.

This sequence belongs to the protein kinase superfamily. AGC Ser/Thr protein kinase family. S6 kinase subfamily. As to quaternary structure, interacts with PPP1R9A/neurabin-1. Interacts with RPTOR. Interacts with IRS1. Interacts with EIF3B and EIF3C. Interacts with POLDIP3. Interacts with TRAF4. Interacts (via N-terminus) with IER5. In terms of processing, dephosphorylation by PPP1CC at Thr-412 in mitochondrion. Phosphorylation at Thr-412 is regulated by mTORC1. The phosphorylation at this site is maintained by an agonist-dependent autophosphorylation mechanism. Activated by phosphorylation at Thr-252 by PDPK1. In terms of tissue distribution, brain.

Its subcellular location is the cytoplasm. It localises to the synapse. The protein resides in the synaptosome. The protein localises to the mitochondrion outer membrane. It is found in the mitochondrion. It carries out the reaction L-seryl-[protein] + ATP = O-phospho-L-seryl-[protein] + ADP + H(+). It catalyses the reaction L-threonyl-[protein] + ATP = O-phospho-L-threonyl-[protein] + ADP + H(+). With respect to regulation, activation requires multiple phosphorylation events on serine/threonine residues. Activation appears to be first mediated by phosphorylation of multiple sites in the autoinhibitory domain, which facilitates phosphorylation at Thr-412, disrupting the autoinhibitory mechanism and allowing phosphorylation of Thr-252 by PDPK1. The active conformation of the kinase is believed to be stabilized by a mechanism involving three conserved phosphorylation sites located in the kinase domain activation loop (Thr-252) and in the AGC-kinase C-terminal domain (Ser-394 in the middle of the tail/linker region and Thr-412 within a hydrophobic motif at its end). Activated by mTORC1; isoform Alpha I and isoform Alpha II are sensitive to rapamycin, which inhibits activating phosphorylation at Thr-412. Activated by PDPK1. Functionally, serine/threonine-protein kinase that acts downstream of mTOR signaling in response to growth factors and nutrients to promote cell proliferation, cell growth and cell cycle progression. Regulates protein synthesis through phosphorylation of EIF4B, RPS6 and EEF2K, and contributes to cell survival by repressing the pro-apoptotic function of BAD. Under conditions of nutrient depletion, the inactive form associates with the EIF3 translation initiation complex. Upon mitogenic stimulation, phosphorylation by the mechanistic target of rapamycin complex 1 (mTORC1) leads to dissociation from the EIF3 complex and activation. The active form then phosphorylates and activates several substrates in the pre-initiation complex, including the EIF2B complex and the cap-binding complex component EIF4B. Also controls translation initiation by phosphorylating a negative regulator of EIF4A, PDCD4, targeting it for ubiquitination and subsequent proteolysis. Promotes initiation of the pioneer round of protein synthesis by phosphorylating POLDIP3/SKAR. In response to IGF1, activates translation elongation by phosphorylating EEF2 kinase (EEF2K), which leads to its inhibition and thus activation of EEF2. Also plays a role in feedback regulation of mTORC2 by mTORC1 by phosphorylating MAPKAP1/SIN1, MTOR and RICTOR, resulting in the inhibition of mTORC2 and AKT1 signaling. Also involved in feedback regulation of mTORC1 and mTORC2 by phosphorylating DEPTOR. Mediates cell survival by phosphorylating the pro-apoptotic protein BAD and suppressing its pro-apoptotic function. Phosphorylates mitochondrial URI1 leading to dissociation of a URI1-PPP1CC complex. The free mitochondrial PPP1CC can then dephosphorylate RPS6KB1 at Thr-412, which is proposed to be a negative feedback mechanism for the RPS6KB1 anti-apoptotic function. Mediates TNF-alpha-induced insulin resistance by phosphorylating IRS1 at multiple serine residues, resulting in accelerated degradation of IRS1. In cells lacking functional TSC1-2 complex, constitutively phosphorylates and inhibits GSK3B. May be involved in cytoskeletal rearrangement through binding to neurabin. Phosphorylates and activates the pyrimidine biosynthesis enzyme CAD, downstream of MTOR. Following activation by mTORC1, phosphorylates EPRS and thereby plays a key role in fatty acid uptake by adipocytes and also most probably in interferon-gamma-induced translation inhibition. The protein is Ribosomal protein S6 kinase beta-1 (Rps6kb1) of Rattus norvegicus (Rat).